Here is an 883-residue protein sequence, read N- to C-terminus: Phosphoenolpyruvate carboxylase (883 aa).

Residues histidine 138 and lysine 546 contribute to the active site.

The protein belongs to the PEPCase type 1 family. Requires Mg(2+) as cofactor.

It catalyses the reaction oxaloacetate + phosphate = phosphoenolpyruvate + hydrogencarbonate. Forms oxaloacetate, a four-carbon dicarboxylic acid source for the tricarboxylic acid cycle. The chain is Phosphoenolpyruvate carboxylase from Enterobacter sp. (strain 638).